A 159-amino-acid chain; its full sequence is 17 kDa surface antigen (159 aa).

An N-terminal signal peptide occupies residues 1 to 19 (MKLLSKIMIIALATSMLQA). C20 carries N-palmitoyl cysteine lipidation. C20 is lipidated: S-diacylglycerol cysteine.

This sequence belongs to the rickettsiale 17 kDa surface antigen family.

The protein resides in the cell outer membrane. The chain is 17 kDa surface antigen (omp) from Rickettsia japonica (strain ATCC VR-1363 / YH).